The primary structure comprises 22 residues: Chlorophyllase type 1 (22 aa).

The protein belongs to the AB hydrolase superfamily. Lipase family.

The catalysed reaction is a chlorophyll + H2O = a chlorophyllide + phytol + H(+). The protein operates within porphyrin-containing compound metabolism; chlorophyll degradation. Catalyzes the hydrolysis of ester bond in chlorophyll to yield chlorophyllide and phytol. The chain is Chlorophyllase type 1 from Chenopodium album (Fat hen).